The chain runs to 333 residues: Glyceraldehyde-3-phosphate dehydrogenase (333 aa).

S1 carries the post-translational modification N-acetylserine. NAD(+)-binding positions include R10–I11, D31, and S118. D-glyceraldehyde 3-phosphate-binding positions include S147–T149, T178, T207–G208, and R230. C148 functions as the Nucleophile in the catalytic mechanism. Residue N312 participates in NAD(+) binding.

It belongs to the glyceraldehyde-3-phosphate dehydrogenase family. Homotetramer.

It is found in the cytoplasm. The enzyme catalyses D-glyceraldehyde 3-phosphate + phosphate + NAD(+) = (2R)-3-phospho-glyceroyl phosphate + NADH + H(+). The protein operates within carbohydrate degradation; glycolysis; pyruvate from D-glyceraldehyde 3-phosphate: step 1/5. This is Glyceraldehyde-3-phosphate dehydrogenase from Homarus americanus (American lobster).